Reading from the N-terminus, the 101-residue chain is MARLALINREEKRVKLAEKFSAKREALIATINNQNLSEEERFAARLQLQQLPRNASPVRQRRRCAVTGRPRGVFRKFGLGRNKLREIAMKGEIPGVVKASW.

Belongs to the universal ribosomal protein uS14 family. Part of the 30S ribosomal subunit. Contacts proteins S3 and S10.

Functionally, binds 16S rRNA, required for the assembly of 30S particles and may also be responsible for determining the conformation of the 16S rRNA at the A site. In Chromobacterium violaceum (strain ATCC 12472 / DSM 30191 / JCM 1249 / CCUG 213 / NBRC 12614 / NCIMB 9131 / NCTC 9757 / MK), this protein is Small ribosomal subunit protein uS14.